The sequence spans 543 residues: Zinc finger protein 34 (543 aa).

Residues 14–87 enclose the KRAB domain; sequence VTFEDVAVFL…DMHGAEQPSV (74 aa). Positions 84 to 151 are disordered; that stretch reads QPSVDGSAHG…PGEQRGPRLV (68 aa). Positions 124–147 are enriched in basic and acidic residues; the sequence is EPGEVHERVREPEGRLDRPGEQRG. 12 consecutive C2H2-type zinc fingers follow at residues 179–201, 234–256, 262–284, 290–312, 318–340, 346–368, 374–396, 402–424, 430–452, 458–480, 486–508, and 514–536; these read HKCD…KRVH, YYCG…QRLH, YKCE…RRMH, YRCD…QRIH, YKCS…QRIH, YKCS…RRTH, YECK…QRIH, YKCN…QRSH, YECN…QRIH, YKCS…QRSH, YKCA…RRIH, and YTCG…QRIH.

Belongs to the krueppel C2H2-type zinc-finger protein family.

It localises to the nucleus. Functionally, may be involved in transcriptional regulation. This is Zinc finger protein 34 (ZNF34) from Bos taurus (Bovine).